Reading from the N-terminus, the 396-residue chain is 1-deoxy-D-xylulose 5-phosphate reductoisomerase (396 aa).

The NADPH site is built by T15, G16, I18, and N127. Residue K128 participates in 1-deoxy-D-xylulose 5-phosphate binding. An NADPH-binding site is contributed by E129. D153 serves as a coordination point for Mn(2+). 1-deoxy-D-xylulose 5-phosphate-binding residues include S154, E155, S177, and H200. Residue E155 participates in Mn(2+) binding. G206 provides a ligand contact to NADPH. 4 residues coordinate 1-deoxy-D-xylulose 5-phosphate: S213, N218, K219, and E222. E222 serves as a coordination point for Mn(2+).

This sequence belongs to the DXR family. The cofactor is Mg(2+). It depends on Mn(2+) as a cofactor.

The enzyme catalyses 2-C-methyl-D-erythritol 4-phosphate + NADP(+) = 1-deoxy-D-xylulose 5-phosphate + NADPH + H(+). Its pathway is isoprenoid biosynthesis; isopentenyl diphosphate biosynthesis via DXP pathway; isopentenyl diphosphate from 1-deoxy-D-xylulose 5-phosphate: step 1/6. Functionally, catalyzes the NADPH-dependent rearrangement and reduction of 1-deoxy-D-xylulose-5-phosphate (DXP) to 2-C-methyl-D-erythritol 4-phosphate (MEP). The chain is 1-deoxy-D-xylulose 5-phosphate reductoisomerase from Anaplasma marginale (strain Florida).